Here is a 199-residue protein sequence, read N- to C-terminus: Octanoyltransferase (199 aa).

The 173-residue stretch at Ser27 to Lys199 folds into the BPL/LPL catalytic domain. Residues Arg66–His73, Ser133–Gly135, and Gly146–Ala148 each bind substrate. The Acyl-thioester intermediate role is filled by Cys164.

This sequence belongs to the LipB family.

It localises to the cytoplasm. The enzyme catalyses octanoyl-[ACP] + L-lysyl-[protein] = N(6)-octanoyl-L-lysyl-[protein] + holo-[ACP] + H(+). It participates in protein modification; protein lipoylation via endogenous pathway; protein N(6)-(lipoyl)lysine from octanoyl-[acyl-carrier-protein]: step 1/2. In terms of biological role, catalyzes the transfer of endogenously produced octanoic acid from octanoyl-acyl-carrier-protein onto the lipoyl domains of lipoate-dependent enzymes. Lipoyl-ACP can also act as a substrate although octanoyl-ACP is likely to be the physiological substrate. The polypeptide is Octanoyltransferase (Legionella pneumophila (strain Paris)).